Consider the following 162-residue polypeptide: Peptidyl-prolyl cis-trans isomerase-like 1 (162 aa).

The 155-residue stretch at 1–155 folds into the PPIase cyclophilin-type domain; sequence MATDVAFDTS…DGVKILRARI (155 aa).

The protein belongs to the cyclophilin-type PPIase family. PPIL1 subfamily.

The enzyme catalyses [protein]-peptidylproline (omega=180) = [protein]-peptidylproline (omega=0). Functionally, PPIases accelerate the folding of proteins. It catalyzes the cis-trans isomerization of proline imidic peptide bonds in oligopeptides. This chain is Peptidyl-prolyl cis-trans isomerase-like 1 (cypC), found in Aspergillus niger.